The following is a 71-amino-acid chain: NAD(P)H-quinone oxidoreductase subunit O (71 aa).

Belongs to the complex I NdhO subunit family. As to quaternary structure, NDH-1 can be composed of about 15 different subunits; different subcomplexes with different compositions have been identified which probably have different functions.

It is found in the cellular thylakoid membrane. The catalysed reaction is a plastoquinone + NADH + (n+1) H(+)(in) = a plastoquinol + NAD(+) + n H(+)(out). It catalyses the reaction a plastoquinone + NADPH + (n+1) H(+)(in) = a plastoquinol + NADP(+) + n H(+)(out). Functionally, NDH-1 shuttles electrons from an unknown electron donor, via FMN and iron-sulfur (Fe-S) centers, to quinones in the respiratory and/or the photosynthetic chain. The immediate electron acceptor for the enzyme in this species is believed to be plastoquinone. Couples the redox reaction to proton translocation, and thus conserves the redox energy in a proton gradient. Cyanobacterial NDH-1 also plays a role in inorganic carbon-concentration. The chain is NAD(P)H-quinone oxidoreductase subunit O from Microcystis aeruginosa (strain NIES-843 / IAM M-2473).